The following is a 324-amino-acid chain: NAD kinase (324 aa).

Residue aspartate 89 is the Proton acceptor of the active site. NAD(+) is bound by residues 89–90, arginine 94, 163–164, aspartate 193, and 204–209; these read DG, NE, and TAYAFS.

The protein belongs to the NAD kinase family. The cofactor is a divalent metal cation.

Its subcellular location is the cytoplasm. It catalyses the reaction NAD(+) + ATP = ADP + NADP(+) + H(+). Involved in the regulation of the intracellular balance of NAD and NADP, and is a key enzyme in the biosynthesis of NADP. Catalyzes specifically the phosphorylation on 2'-hydroxyl of the adenosine moiety of NAD to yield NADP. The chain is NAD kinase from Nocardia farcinica (strain IFM 10152).